Consider the following 220-residue polypeptide: UPF0319 protein YccT (220 aa).

The N-terminal stretch at 1–20 is a signal peptide; the sequence is MKTGIVTTLIALCLPVSVFA.

Belongs to the UPF0319 family.

In Escherichia coli (strain 55989 / EAEC), this protein is UPF0319 protein YccT.